A 191-amino-acid chain; its full sequence is Putative manganese efflux pump MntP (191 aa).

6 helical membrane passes run 3-23 (PISI…AAIG), 37-57 (LRAG…GWLL), 65-85 (VEAF…IHMI), 107-129 (WKLA…GLAF), 144-164 (CTLT…SMVG), and 169-189 (IIGG…HLHG).

Belongs to the MntP (TC 9.B.29) family.

The protein resides in the cell inner membrane. Functionally, probably functions as a manganese efflux pump. This Stenotrophomonas maltophilia (strain K279a) protein is Putative manganese efflux pump MntP.